A 528-amino-acid polypeptide reads, in one-letter code: Glutamyl-tRNA(Gln) amidotransferase subunit A, mitochondrial (528 aa).

The Charge relay system role is filled by Lys-76. Residues 147 to 166 form a disordered region; that stretch reads QYREKRKQNPHSKNEDSDWL. Ser-171 serves as the catalytic Charge relay system. The active-site Acyl-ester intermediate is the Ser-195.

It belongs to the amidase family. GatA subfamily. Subunit of the heterotrimeric GatCAB amidotransferase (AdT) complex, composed of A (QRSL1), B (GATB) and C (GATC) subunits.

It is found in the mitochondrion. It carries out the reaction L-glutamyl-tRNA(Gln) + L-glutamine + ATP + H2O = L-glutaminyl-tRNA(Gln) + L-glutamate + ADP + phosphate + H(+). In terms of biological role, allows the formation of correctly charged Gln-tRNA(Gln) through the transamidation of misacylated Glu-tRNA(Gln) in the mitochondria. The reaction takes place in the presence of glutamine and ATP through an activated gamma-phospho-Glu-tRNA(Gln). The sequence is that of Glutamyl-tRNA(Gln) amidotransferase subunit A, mitochondrial from Macaca fascicularis (Crab-eating macaque).